A 597-amino-acid polypeptide reads, in one-letter code: Glutamine--fructose-6-phosphate aminotransferase [isomerizing] (597 aa).

Cys2 acts as the Nucleophile; for GATase activity in catalysis. Residues 2–218 (CGIVGYIGDS…ENSVGQISLE (217 aa)) enclose the Glutamine amidotransferase type-2 domain. SIS domains follow at residues 276 to 416 (IDPE…QLGT) and 449 to 587 (LSKR…VDHP). Lys592 (for Fru-6P isomerization activity) is an active-site residue.

In terms of assembly, homodimer.

The protein localises to the cytoplasm. It catalyses the reaction D-fructose 6-phosphate + L-glutamine = D-glucosamine 6-phosphate + L-glutamate. Its function is as follows. Catalyzes the first step in hexosamine metabolism, converting fructose-6P into glucosamine-6P using glutamine as a nitrogen source. The protein is Glutamine--fructose-6-phosphate aminotransferase [isomerizing] of Helicobacter pylori (strain J99 / ATCC 700824) (Campylobacter pylori J99).